Here is a 225-residue protein sequence, read N- to C-terminus: MNSIQFPLLDRTAQNSVISTTLNDLSNWSRLSSLWPLLYGTSCCFIEFASLIGSRFDFDRYGLVPRSSPRQADLILTAGTVTMKMAPSLVRLYEQMPEPKYVIAMGACTITGGMFSTDSYSTVRGVDKLIPVDVYLPGCPPKPEAVIDAITKLRKKISRELYEDRIRSQRVNRCFTTNHKFHVRRSIHTGNYDQRVLYQPPSTSEIPTEIFFKYKNSVSSPELVN.

Residues C43, C44, C108, and C139 each coordinate [4Fe-4S] cluster.

The protein belongs to the complex I 20 kDa subunit family. NDH is composed of at least 16 different subunits, 5 of which are encoded in the nucleus. [4Fe-4S] cluster is required as a cofactor.

It localises to the plastid. Its subcellular location is the chloroplast thylakoid membrane. The enzyme catalyses a plastoquinone + NADH + (n+1) H(+)(in) = a plastoquinol + NAD(+) + n H(+)(out). It catalyses the reaction a plastoquinone + NADPH + (n+1) H(+)(in) = a plastoquinol + NADP(+) + n H(+)(out). Its function is as follows. NDH shuttles electrons from NAD(P)H:plastoquinone, via FMN and iron-sulfur (Fe-S) centers, to quinones in the photosynthetic chain and possibly in a chloroplast respiratory chain. The immediate electron acceptor for the enzyme in this species is believed to be plastoquinone. Couples the redox reaction to proton translocation, and thus conserves the redox energy in a proton gradient. The polypeptide is NAD(P)H-quinone oxidoreductase subunit K, chloroplastic (Atropa belladonna (Belladonna)).